The sequence spans 379 residues: Protein RecA (379 aa).

79–86 contributes to the ATP binding site; the sequence is GPESSGKT.

The protein belongs to the RecA family.

It localises to the cytoplasm. Can catalyze the hydrolysis of ATP in the presence of single-stranded DNA, the ATP-dependent uptake of single-stranded DNA by duplex DNA, and the ATP-dependent hybridization of homologous single-stranded DNAs. It interacts with LexA causing its activation and leading to its autocatalytic cleavage. The protein is Protein RecA of Streptococcus thermophilus.